A 492-amino-acid chain; its full sequence is Catalase isozyme 1 (492 aa).

Catalysis depends on residues histidine 65 and asparagine 138. Heme is bound at residue tyrosine 348.

This sequence belongs to the catalase family. Homotetramer. Heme serves as cofactor.

The protein resides in the cytoplasm. It localises to the cytosol. Its subcellular location is the peroxisome matrix. It catalyses the reaction 2 H2O2 = O2 + 2 H2O. Inhibited by salicylic acid. In terms of biological role, catalyzes the degradation of hydrogen peroxide (H(2)O(2)) generated by peroxisomal oxidases to water and oxygen, thereby protecting cells from the toxic effects of hydrogen peroxide. In Nicotiana tabacum (Common tobacco), this protein is Catalase isozyme 1 (CAT-1).